A 777-amino-acid polypeptide reads, in one-letter code: Subtilisin-like protease SBT3.7 (777 aa).

A signal peptide spans 1–22; it reads MRNHRTSIFVVLSLVIILNGQS. The propeptide at 23-113 is activation peptide; sequence GFLPRAGAES…VIPDRFYKPA (91 aa). Positions 34–111 constitute an Inhibitor I9 domain; that stretch reads VHIVYLGEKQ…VHVIPDRFYK (78 aa). The region spanning 117 to 624 is the Peptidase S8 domain; that stretch reads TWDYLGLSPT…GGLVNPEKAT (508 aa). Asn133 carries an N-linked (GlcNAc...) asparagine glycan. The active-site Charge relay system is Asp147. N-linked (GlcNAc...) asparagine glycosylation is found at Asn180 and Asn206. His222 serves as the catalytic Charge relay system. Asn237, Asn397, Asn412, and Asn540 each carry an N-linked (GlcNAc...) asparagine glycan. In terms of domain architecture, PA spans 386–481; that stretch reads SLVYPENPGN…ELGTYILFYI (96 aa). Ser555 serves as the catalytic Charge relay system. Asn647, Asn723, and Asn758 each carry an N-linked (GlcNAc...) asparagine glycan.

Belongs to the peptidase S8 family.

It is found in the secreted. This chain is Subtilisin-like protease SBT3.7, found in Arabidopsis thaliana (Mouse-ear cress).